The following is a 308-amino-acid chain: 4-hydroxy-3-methylbut-2-enyl diphosphate reductase (308 aa).

Cys12 lines the [4Fe-4S] cluster pocket. Residues His43 and His77 each coordinate (2E)-4-hydroxy-3-methylbut-2-enyl diphosphate. 2 residues coordinate dimethylallyl diphosphate: His43 and His77. Residues His43 and His77 each coordinate isopentenyl diphosphate. Cys99 provides a ligand contact to [4Fe-4S] cluster. His127 provides a ligand contact to (2E)-4-hydroxy-3-methylbut-2-enyl diphosphate. A dimethylallyl diphosphate-binding site is contributed by His127. His127 contacts isopentenyl diphosphate. The active-site Proton donor is the Glu129. Thr167 is a (2E)-4-hydroxy-3-methylbut-2-enyl diphosphate binding site. Cys197 contributes to the [4Fe-4S] cluster binding site. (2E)-4-hydroxy-3-methylbut-2-enyl diphosphate-binding residues include Ser225, Ser226, Asn227, and Ser269. Residues Ser225, Ser226, Asn227, and Ser269 each contribute to the dimethylallyl diphosphate site. Positions 225, 226, 227, and 269 each coordinate isopentenyl diphosphate.

It belongs to the IspH family. The cofactor is [4Fe-4S] cluster.

The catalysed reaction is isopentenyl diphosphate + 2 oxidized [2Fe-2S]-[ferredoxin] + H2O = (2E)-4-hydroxy-3-methylbut-2-enyl diphosphate + 2 reduced [2Fe-2S]-[ferredoxin] + 2 H(+). It carries out the reaction dimethylallyl diphosphate + 2 oxidized [2Fe-2S]-[ferredoxin] + H2O = (2E)-4-hydroxy-3-methylbut-2-enyl diphosphate + 2 reduced [2Fe-2S]-[ferredoxin] + 2 H(+). The protein operates within isoprenoid biosynthesis; dimethylallyl diphosphate biosynthesis; dimethylallyl diphosphate from (2E)-4-hydroxy-3-methylbutenyl diphosphate: step 1/1. It participates in isoprenoid biosynthesis; isopentenyl diphosphate biosynthesis via DXP pathway; isopentenyl diphosphate from 1-deoxy-D-xylulose 5-phosphate: step 6/6. Its function is as follows. Catalyzes the conversion of 1-hydroxy-2-methyl-2-(E)-butenyl 4-diphosphate (HMBPP) into a mixture of isopentenyl diphosphate (IPP) and dimethylallyl diphosphate (DMAPP). Acts in the terminal step of the DOXP/MEP pathway for isoprenoid precursor biosynthesis. In Wolbachia pipientis subsp. Culex pipiens (strain wPip), this protein is 4-hydroxy-3-methylbut-2-enyl diphosphate reductase.